The primary structure comprises 330 residues: Methionyl-tRNA formyltransferase (330 aa).

Position 117-120 (117-120 (SLLP)) interacts with (6S)-5,6,7,8-tetrahydrofolate.

This sequence belongs to the Fmt family.

It catalyses the reaction L-methionyl-tRNA(fMet) + (6R)-10-formyltetrahydrofolate = N-formyl-L-methionyl-tRNA(fMet) + (6S)-5,6,7,8-tetrahydrofolate + H(+). Attaches a formyl group to the free amino group of methionyl-tRNA(fMet). The formyl group appears to play a dual role in the initiator identity of N-formylmethionyl-tRNA by promoting its recognition by IF2 and preventing the misappropriation of this tRNA by the elongation apparatus. This chain is Methionyl-tRNA formyltransferase, found in Verminephrobacter eiseniae (strain EF01-2).